The primary structure comprises 444 residues: C4-dicarboxylate transport protein (444 aa).

The next 9 membrane-spanning stretches (helical) occupy residues 18–40 (FYSHLYVQVLVAIAAGILLGHFY), 53–75 (AFIKLVKMIIAPVIFLTVATGIA), 90–112 (AMLYFLTFSTLALIIGLIVANVV), 142–159 (IVGFLTNIIPTTIVGAFA), 163–180 (ILQVLFFSVLFGIALAMV), 201–222 (LVAILMKAAPIGAFGAMAFTIG), 232–254 (LAMLIGTFYITSLLFVFIVLGAV), 327–349 (LFIAQATGIHLSWGDQILLLLVA), and 364–386 (FITLAATLSVVPSVPVAGMALIL).

It belongs to the dicarboxylate/amino acid:cation symporter (DAACS) (TC 2.A.23) family.

It localises to the cell inner membrane. Its function is as follows. Responsible for the transport of dicarboxylates such as succinate, fumarate, and malate from the periplasm across the inner membrane. This transport system plays an important role in the energy supply of rhizobium-legume symbionts. In Rhizobium leguminosarum, this protein is C4-dicarboxylate transport protein (dctA).